Here is a 437-residue protein sequence, read N- to C-terminus: Serine carboxypeptidase-like 7 (437 aa).

The signal sequence occupies residues 1–25 (MANDYVSTVLLLLSLLIFLSQRTDS). Intrachain disulfides connect Cys-84–Cys-327, Cys-248–Cys-262, and Cys-286–Cys-293. The N-linked (GlcNAc...) asparagine glycan is linked to Asn-105. The active site involves Ser-180. A glycan (N-linked (GlcNAc...) asparagine) is linked at Asn-346. The active site involves Asp-362. Asn-378 is a glycosylation site (N-linked (GlcNAc...) asparagine). The active site involves His-415.

This sequence belongs to the peptidase S10 family. In terms of tissue distribution, ubiquitous.

The protein localises to the secreted. Probable carboxypeptidase. This chain is Serine carboxypeptidase-like 7 (SCPL7), found in Arabidopsis thaliana (Mouse-ear cress).